The sequence spans 358 residues: Bi-functional coumaroyl CoA and feruloyl CoA ortho-hydroxylase F6H2-2-1 (358 aa).

Residues serine 200–proline 308 enclose the Fe2OG dioxygenase domain. Tyrosine 216 contacts 2-oxoglutarate. The Fe cation site is built by histidine 231, aspartate 233, and histidine 289. Arginine 299 and serine 301 together coordinate 2-oxoglutarate.

The protein belongs to the iron/ascorbate-dependent oxidoreductase family. Requires L-ascorbate as cofactor. Fe(2+) serves as cofactor. Mostly expressed in underground stems and stems.

The enzyme catalyses (E)-4-coumaroyl-CoA + 2-oxoglutarate + O2 = (E)-2,4-dihydroxycinnamoyl-CoA + succinate + CO2. It catalyses the reaction (E)-feruloyl-CoA + 2-oxoglutarate + O2 = (E)-6-hydroxyferuloyl-CoA + succinate + CO2. It participates in phenylpropanoid metabolism. Its function is as follows. 2-oxoglutarate (OG)- and Fe(II)-dependent dioxygenase (2OGD) involved in scopoletin and umbelliferone biosynthesis. Converts feruloyl CoA into 6'-hydroxyferuloyl CoA, and p-coumaroyl CoA into 2,4-dihydroxycinnamoyl-CoA, but has no activity toward caffeoyl-CoA. This chain is Bi-functional coumaroyl CoA and feruloyl CoA ortho-hydroxylase F6H2-2-1, found in Ipomoea batatas (Sweet potato).